We begin with the raw amino-acid sequence, 103 residues long: Small integral membrane protein 32 (103 aa).

Residues 55-75 (YLLLFFLLLLSVALVVLFIGC) traverse the membrane as a helical segment.

The protein localises to the membrane. The chain is Small integral membrane protein 32 from Homo sapiens (Human).